Here is an 874-residue protein sequence, read N- to C-terminus: Alanine--tRNA ligase (874 aa).

Zn(2+) contacts are provided by H563, H567, C664, and H668.

This sequence belongs to the class-II aminoacyl-tRNA synthetase family. The cofactor is Zn(2+).

It is found in the cytoplasm. The enzyme catalyses tRNA(Ala) + L-alanine + ATP = L-alanyl-tRNA(Ala) + AMP + diphosphate. Catalyzes the attachment of alanine to tRNA(Ala) in a two-step reaction: alanine is first activated by ATP to form Ala-AMP and then transferred to the acceptor end of tRNA(Ala). Also edits incorrectly charged Ser-tRNA(Ala) and Gly-tRNA(Ala) via its editing domain. This is Alanine--tRNA ligase from Methylobacillus flagellatus (strain ATCC 51484 / DSM 6875 / VKM B-1610 / KT).